A 132-amino-acid chain; its full sequence is Putative nickel-responsive regulator (132 aa).

4 residues coordinate Ni(2+): histidine 77, histidine 88, histidine 90, and cysteine 96.

This sequence belongs to the transcriptional regulatory CopG/NikR family. Requires Ni(2+) as cofactor.

Its function is as follows. Transcriptional regulator. This Brucella abortus (strain S19) protein is Putative nickel-responsive regulator.